Here is a 282-residue protein sequence, read N- to C-terminus: Aldo-keto reductase MT3049 (282 aa).

The active-site Proton donor is the Y57. NADPH contacts are provided by L197, V235, R237, S238, A239, R243, S246, N247, and R273.

It belongs to the aldo/keto reductase family.

The polypeptide is Aldo-keto reductase MT3049 (Mycobacterium tuberculosis (strain CDC 1551 / Oshkosh)).